We begin with the raw amino-acid sequence, 132 residues long: Small ribosomal subunit protein uS8 (132 aa).

It belongs to the universal ribosomal protein uS8 family. As to quaternary structure, part of the 30S ribosomal subunit. Contacts proteins S5 and S12.

One of the primary rRNA binding proteins, it binds directly to 16S rRNA central domain where it helps coordinate assembly of the platform of the 30S subunit. This Bartonella quintana (strain Toulouse) (Rochalimaea quintana) protein is Small ribosomal subunit protein uS8.